A 121-amino-acid polypeptide reads, in one-letter code: Large ribosomal subunit protein uL14 (121 aa).

It belongs to the universal ribosomal protein uL14 family. Part of the 50S ribosomal subunit. Forms a cluster with proteins L3 and L19. In the 70S ribosome, L14 and L19 interact and together make contacts with the 16S rRNA in bridges B5 and B8.

Functionally, binds to 23S rRNA. Forms part of two intersubunit bridges in the 70S ribosome. The sequence is that of Large ribosomal subunit protein uL14 from Prochlorococcus marinus (strain NATL1A).